A 393-amino-acid chain; its full sequence is METFLFTSESVNEGHPDKLCDQISDAVLDACLEQDPESKVACETCTKTNLVMVFGEITTKANVDYEKIVRDTCRNIGFISDDVGLDADNCKVLVYIEQQSPDIAQGVHGHLTKQPEEIGAGDQGHMFGYATDETPEFMPLSHVLATKLGARLTEVRKNGTCPWLRPDGKTQVTVEYYNENGAMVPVRVHTVLISTQHDETVTNDEIAHDLKEHVIKPVIPEKYLDEKTIFHLNPSGRFVIGGPHGDAGLTGRKIIIDTYGGWGAHGGGAFSGKDPTKVDRSGAYIVRQAAKSVVANGLARRCIVQVSYAIGVPEPLSVFVDTYGTGMIPDKEILKIVKENFDFRPGMIAINLDLKRGGNGRFLKTAAYGHFGRDDTDFTWEVVKPLKCEKAQD.

Glu-9 provides a ligand contact to Mg(2+). Residue His-15 coordinates ATP. Glu-43 is a binding site for K(+). Residues Glu-56 and Gln-99 each coordinate L-methionine. ATP is bound by residues 167–169, 235–238, Asp-246, 252–253, Ala-269, Lys-273, and Lys-277; these read DGK, SGRF, and RK. Asp-246 provides a ligand contact to L-methionine. Lys-277 is an L-methionine binding site.

The protein belongs to the AdoMet synthase family. As to quaternary structure, homotetramer. Mn(2+) serves as cofactor. The cofactor is Mg(2+). Requires Co(2+) as cofactor. It depends on K(+) as a cofactor.

The protein localises to the cytoplasm. The enzyme catalyses L-methionine + ATP + H2O = S-adenosyl-L-methionine + phosphate + diphosphate. It participates in amino-acid biosynthesis; S-adenosyl-L-methionine biosynthesis; S-adenosyl-L-methionine from L-methionine: step 1/1. In terms of biological role, catalyzes the formation of S-adenosylmethionine from methionine and ATP. The reaction comprises two steps that are both catalyzed by the same enzyme: formation of S-adenosylmethionine (AdoMet) and triphosphate, and subsequent hydrolysis of the triphosphate. The protein is S-adenosylmethionine synthase 3 (SAM3) of Petunia hybrida (Petunia).